The chain runs to 716 residues: Delta-1-pyrroline-5-carboxylate synthase 1 (716 aa).

The tract at residues 1-296 (MASVDPSRSF…WESSKDVSTR (296 aa)) is glutamate 5-kinase. 3 residues coordinate substrate: serine 60, aspartate 157, and asparagine 176. ATP-binding positions include 196 to 197 (SD), 202 to 207 (YSGPPS), and 236 to 242 (RGGMTAK). The gamma-glutamyl phosphate reductase stretch occupies residues 297-716 (EMAVAARDCS…VYTHKSLPLQ (420 aa)).

It in the N-terminal section; belongs to the glutamate 5-kinase family. This sequence in the C-terminal section; belongs to the gamma-glutamyl phosphate reductase family. Expressed at high levels in leaves.

It carries out the reaction L-glutamate + ATP = L-glutamyl 5-phosphate + ADP. It catalyses the reaction L-glutamate 5-semialdehyde + phosphate + NADP(+) = L-glutamyl 5-phosphate + NADPH + H(+). Its pathway is amino-acid biosynthesis; L-proline biosynthesis; L-glutamate 5-semialdehyde from L-glutamate: step 1/2. It participates in amino-acid biosynthesis; L-proline biosynthesis; L-glutamate 5-semialdehyde from L-glutamate: step 2/2. With respect to regulation, feedback regulated by proline. P5CS plays a key role in proline biosynthesis, leading to osmoregulation in plants. Involved in abiotic stress tolerance. The sequence is that of Delta-1-pyrroline-5-carboxylate synthase 1 from Oryza sativa subsp. japonica (Rice).